The following is a 752-amino-acid chain: Peptidyl-prolyl cis-trans isomerase G (752 aa).

Residues 11–176 (FFDIAINNQP…AEVRILSCGE (166 aa)) form the PPIase cyclophilin-type domain. Basic residues predominate over residues 182 to 193 (KVKKEEKKRHKS). A disordered region spans residues 182–752 (KVKKEEKKRH…SPGTDEDKSG (571 aa)). The span at 194 to 214 (SSSSSSSDSDSSSDSQSSSES) shows a compositional bias: low complexity. Over residues 226–251 (RKRKKKHRKNSRKHKKEKKKRKKSKK) the composition is skewed to basic residues. A phosphoserine mark is found at serine 252, serine 254, serine 255, serine 257, and serine 288. Residues 290–308 (PKADDKERKNREREREREC) are compositionally biased toward basic and acidic residues. Residue serine 313 is modified to Phosphoserine. The span at 327-345 (SGRKIKGRGPRRYRTPSRS) shows a compositional bias: basic residues. 2 stretches are compositionally biased toward basic and acidic residues: residues 346–366 (RSRD…EMQR) and 377–447 (RWIK…DKYN). Serine 354 is subject to Phosphoserine. Threonine 356 carries the post-translational modification Phosphothreonine. Position 384 is a phosphoserine (serine 384). Lysine 390 is covalently cross-linked (Glycyl lysine isopeptide (Lys-Gly) (interchain with G-Cter in SUMO2)). Phosphoserine is present on residues serine 395, serine 411, and serine 413. Over residues 448–461 (KNKVKKRGKSKSRS) the composition is skewed to basic residues. 2 stretches are compositionally biased toward basic and acidic residues: residues 462–552 (KSKE…DLTK) and 577–598 (RSHD…QEYR). Residues 599 to 625 (RRGRSRSRDRRTPGRSRSKDRRRRRRD) are compositionally biased toward basic residues. Residues 626–684 (SRSSEREESQSRNKDKYRSQESKSSHRKENSEGEKRTYSKSRDHNSSSNNREKKADREQ) are compositionally biased toward basic and acidic residues. Serine 685 and serine 688 each carry phosphoserine. The segment covering 685–705 (SPVSKTKQSSQDNEVKSSTLK) has biased composition (polar residues). Residue lysine 691 forms a Glycyl lysine isopeptide (Lys-Gly) (interchain with G-Cter in SUMO2) linkage. Phosphoserine occurs at positions 694, 742, and 743. Positions 706-752 (NQEDEKTRSPVEKENQKSKGQENDHVHDKNKKCDHESSPGTDEDKSG) are enriched in basic and acidic residues. Threonine 746 carries the post-translational modification Phosphothreonine. Serine 751 is subject to Phosphoserine.

As to quaternary structure, interacts with CLK1, PNN and with the phosphorylated C-terminal domain of RNA polymerase II.

Its subcellular location is the nucleus matrix. The protein resides in the nucleus speckle. It catalyses the reaction [protein]-peptidylproline (omega=180) = [protein]-peptidylproline (omega=0). Its activity is regulated as follows. Inhibited by cyclosporin A (CsA). PPIase that catalyzes the cis-trans isomerization of proline imidic peptide bonds in oligopeptides and may therefore assist protein folding. May be implicated in the folding, transport, and assembly of proteins. May play an important role in the regulation of pre-mRNA splicing. This Mus musculus (Mouse) protein is Peptidyl-prolyl cis-trans isomerase G (Ppig).